A 157-amino-acid polypeptide reads, in one-letter code: Regulatory protein RecX (157 aa).

It belongs to the RecX family.

The protein resides in the cytoplasm. Functionally, modulates RecA activity. The sequence is that of Regulatory protein RecX from Leptothrix cholodnii (strain ATCC 51168 / LMG 8142 / SP-6) (Leptothrix discophora (strain SP-6)).